A 64-amino-acid polypeptide reads, in one-letter code: Large ribosomal subunit protein bL35 (64 aa).

Over residues 1 to 15 the composition is skewed to basic residues; it reads MPKNKTHSGASKRFR. A disordered region spans residues 1-20; the sequence is MPKNKTHSGASKRFRVTGSG.

The protein belongs to the bacterial ribosomal protein bL35 family.

This chain is Large ribosomal subunit protein bL35, found in Nocardioides sp. (strain ATCC BAA-499 / JS614).